Consider the following 242-residue polypeptide: Ribonuclease PH (242 aa).

Phosphate is bound by residues arginine 86 and 124–126 (GTR).

Belongs to the RNase PH family. As to quaternary structure, homohexameric ring arranged as a trimer of dimers.

The enzyme catalyses tRNA(n+1) + phosphate = tRNA(n) + a ribonucleoside 5'-diphosphate. In terms of biological role, phosphorolytic 3'-5' exoribonuclease that plays an important role in tRNA 3'-end maturation. Removes nucleotide residues following the 3'-CCA terminus of tRNAs; can also add nucleotides to the ends of RNA molecules by using nucleoside diphosphates as substrates, but this may not be physiologically important. Probably plays a role in initiation of 16S rRNA degradation (leading to ribosome degradation) during starvation. The chain is Ribonuclease PH from Caulobacter sp. (strain K31).